Reading from the N-terminus, the 90-residue chain is DNA-directed RNA polymerase subunit Rpo11 (90 aa).

Belongs to the archaeal Rpo11/eukaryotic RPB11/RPC19 RNA polymerase subunit family. As to quaternary structure, part of the 13-subunit RNA polymerase complex.

It is found in the cytoplasm. The enzyme catalyses RNA(n) + a ribonucleoside 5'-triphosphate = RNA(n+1) + diphosphate. Its function is as follows. DNA-dependent RNA polymerase (RNAP) catalyzes the transcription of DNA into RNA using the four ribonucleoside triphosphates as substrates. In Sulfolobus acidocaldarius (strain ATCC 33909 / DSM 639 / JCM 8929 / NBRC 15157 / NCIMB 11770), this protein is DNA-directed RNA polymerase subunit Rpo11.